A 475-amino-acid chain; its full sequence is UDP-glycosyltransferase 1 (475 aa).

His15 functions as the Proton acceptor in the catalytic mechanism. An an anthocyanidin-binding site is contributed by His15. Asp117 serves as the catalytic Charge relay. Ala345, Gln347, His362, Trp365, Asn366, Ser367, and Glu370 together coordinate UDP-alpha-D-glucose. Gly385 contacts an anthocyanidin. Glu386 and Gln387 together coordinate UDP-alpha-D-glucose.

It belongs to the UDP-glycosyltransferase family. Mostly expressed in leaves and flowers, and, to a lower extent, in roots and stems.

It carries out the reaction (20S)-protopanaxadiol + UDP-alpha-D-glucose = (20S)-ginsenoside C-K + UDP + H(+). The catalysed reaction is (20S)-ginsenoside Rg3 + UDP-alpha-D-glucose = (20S)-ginsenoside Rd + UDP + H(+). The enzyme catalyses (20S)-ginsenoside Rh2 + UDP-alpha-D-glucose = (20S)-ginsenoside F2 + UDP + H(+). It catalyses the reaction (20S)-protopanaxatriol + UDP-alpha-D-glucose = (20S)-ginsenoside F1 + UDP + H(+). It carries out the reaction dammarenediol-II + UDP-alpha-D-glucose = (20S)-20-O-(beta-D-glucosyl)-3-hydroxydammarene + UDP + H(+). Its pathway is secondary metabolite biosynthesis; terpenoid biosynthesis. Component of the dammarane-type triterpene saponins (e.g. ginsenosides or panaxosides) biosynthetic pathway. Glycosyltransferase that catalyzes the biosynthesis of ginsenoside F1 from protopanaxatriol (PPT). Triggers C20-OH glycosylation of ginsenoside Rg3 to produce ginsenoside Rd. Mediates the conversion of protopanaxadiol (PPD) to the ginsenoside compound K. catalyzes the production of 20S-O-beta-(D-glucosyl)-dammarenediol II form dammarenediol II (DM). This Panax ginseng (Korean ginseng) protein is UDP-glycosyltransferase 1.